We begin with the raw amino-acid sequence, 481 residues long: tRNA-2-methylthio-N(6)-dimethylallyladenosine synthase (481 aa).

Residues 24–140 (RKLFIESYGC…LPNLINEVEE (117 aa)) form the MTTase N-terminal domain. The [4Fe-4S] cluster site is built by cysteine 33, cysteine 69, cysteine 103, cysteine 178, cysteine 182, and cysteine 185. The Radical SAM core domain maps to 164 to 410 (QSNGVSAFVS…VDLQQKHSKQ (247 aa)). The 64-residue stretch at 413–476 (NSVIGTTVEV…SATLIGEPIG (64 aa)) folds into the TRAM domain.

This sequence belongs to the methylthiotransferase family. MiaB subfamily. Monomer. [4Fe-4S] cluster is required as a cofactor.

It localises to the cytoplasm. It catalyses the reaction N(6)-dimethylallyladenosine(37) in tRNA + (sulfur carrier)-SH + AH2 + 2 S-adenosyl-L-methionine = 2-methylsulfanyl-N(6)-dimethylallyladenosine(37) in tRNA + (sulfur carrier)-H + 5'-deoxyadenosine + L-methionine + A + S-adenosyl-L-homocysteine + 2 H(+). Catalyzes the methylthiolation of N6-(dimethylallyl)adenosine (i(6)A), leading to the formation of 2-methylthio-N6-(dimethylallyl)adenosine (ms(2)i(6)A) at position 37 in tRNAs that read codons beginning with uridine. In Christiangramia forsetii (strain DSM 17595 / CGMCC 1.15422 / KT0803) (Gramella forsetii), this protein is tRNA-2-methylthio-N(6)-dimethylallyladenosine synthase.